Consider the following 187-residue polypeptide: UPF0232 protein MMAR_0004 (187 aa).

Disordered regions lie at residues 1–77 (MSDD…QPLG) and 166–187 (ASPSWRKGPRHIAGRGPRDTYG). Basic and acidic residues predominate over residues 14-30 (AARDELSGMDLVRRTLA). Over residues 31–55 (EARAAARARGQDPGRGFAAGPAPRR) the composition is skewed to low complexity.

This sequence belongs to the UPF0232 family.

This Mycobacterium marinum (strain ATCC BAA-535 / M) protein is UPF0232 protein MMAR_0004.